We begin with the raw amino-acid sequence, 264 residues long: ATP synthase subunit a (264 aa).

7 consecutive transmembrane segments (helical) span residues 41–61 (ITNI…INLL), 99–119 (IYFP…LIGM), 129–149 (HFVL…ILGF), 156–176 (FFSL…LVLI), 194–214 (ANIL…YNIM), 217–237 (GIIF…FSGL), and 238–258 (ELGI…GYIK).

This sequence belongs to the ATPase A chain family. In terms of assembly, F-type ATPases have 2 components, CF(1) - the catalytic core - and CF(0) - the membrane proton channel. CF(1) has five subunits: alpha(3), beta(3), gamma(1), delta(1), epsilon(1). CF(0) has three main subunits: a, b and c.

It localises to the mitochondrion inner membrane. In terms of biological role, mitochondrial membrane ATP synthase (F(1)F(0) ATP synthase or Complex V) produces ATP from ADP in the presence of a proton gradient across the membrane which is generated by electron transport complexes of the respiratory chain. F-type ATPases consist of two structural domains, F(1) - containing the extramembraneous catalytic core and F(0) - containing the membrane proton channel, linked together by a central stalk and a peripheral stalk. During catalysis, ATP synthesis in the catalytic domain of F(1) is coupled via a rotary mechanism of the central stalk subunits to proton translocation. Key component of the proton channel; it may play a direct role in the translocation of protons across the membrane. This chain is ATP synthase subunit a (ATP6), found in Podospora anserina (strain S / ATCC MYA-4624 / DSM 980 / FGSC 10383) (Pleurage anserina).